The primary structure comprises 314 residues: N-acyl-aromatic-L-amino acid amidohydrolase (carboxylate-forming) B (314 aa).

Zn(2+) contacts are provided by His-19 and Glu-22. Substrate-binding positions include Arg-63 and 70–71 (NR). His-116 lines the Zn(2+) pocket. Residues Glu-178 and Tyr-289 each coordinate substrate.

Belongs to the AspA/AstE family. Aspartoacylase subfamily. In terms of assembly, homotetramer. The cofactor is Zn(2+).

It is found in the apical cell membrane. The protein localises to the cytoplasm. The enzyme catalyses an N-acyl-aromatic L-alpha-amino acid + H2O = an aromatic L-alpha-amino acid + a carboxylate. The catalysed reaction is an N-acetyl-L-cysteine-S-conjugate + H2O = an S-substituted L-cysteine + acetate. Plays an important role in deacetylating mercapturic acids in kidney proximal tubules. The sequence is that of N-acyl-aromatic-L-amino acid amidohydrolase (carboxylate-forming) B (acy3.2) from Danio rerio (Zebrafish).